An 873-amino-acid chain; its full sequence is Bifunctional uridylyltransferase/uridylyl-removing enzyme (873 aa).

The uridylyltransferase stretch occupies residues 1-332 (MAFQSPLTFN…NGGETEPAVI (332 aa)). The tract at residues 333 to 692 (INEDFQRRGR…MSKKATRGGT (360 aa)) is uridylyl-removing. Residues 451-573 (VDEHSVRLLN…VRDEERLEYL (123 aa)) enclose the HD domain. ACT domains follow at residues 693–773 (EVFV…VKTR) and 800–873 (LMEL…ELAP).

This sequence belongs to the GlnD family. Requires Mg(2+) as cofactor.

The catalysed reaction is [protein-PII]-L-tyrosine + UTP = [protein-PII]-uridylyl-L-tyrosine + diphosphate. It carries out the reaction [protein-PII]-uridylyl-L-tyrosine + H2O = [protein-PII]-L-tyrosine + UMP + H(+). Uridylyltransferase (UTase) activity is inhibited by glutamine, while glutamine activates uridylyl-removing (UR) activity. Its function is as follows. Modifies, by uridylylation and deuridylylation, the PII regulatory proteins (GlnB and homologs), in response to the nitrogen status of the cell that GlnD senses through the glutamine level. Under low glutamine levels, catalyzes the conversion of the PII proteins and UTP to PII-UMP and PPi, while under higher glutamine levels, GlnD hydrolyzes PII-UMP to PII and UMP (deuridylylation). Thus, controls uridylylation state and activity of the PII proteins, and plays an important role in the regulation of nitrogen assimilation and metabolism. The chain is Bifunctional uridylyltransferase/uridylyl-removing enzyme from Vibrio vulnificus (strain CMCP6).